A 119-amino-acid polypeptide reads, in one-letter code: Hydrogenase maturation factor HypA (119 aa).

His-2 is a binding site for Ni(2+). Residues Cys-73, Cys-76, Cys-89, and Cys-92 each coordinate Zn(2+).

It belongs to the HypA/HybF family.

Its function is as follows. Involved in the maturation of [NiFe] hydrogenases. Required for nickel insertion into the metal center of the hydrogenase. In Cupriavidus necator (strain ATCC 17699 / DSM 428 / KCTC 22496 / NCIMB 10442 / H16 / Stanier 337) (Ralstonia eutropha), this protein is Hydrogenase maturation factor HypA.